We begin with the raw amino-acid sequence, 485 residues long: Glutamyl-tRNA(Gln) amidotransferase subunit A (485 aa).

Residues Lys-78 and Ser-153 each act as charge relay system in the active site. Residue Ser-177 is the Acyl-ester intermediate of the active site.

This sequence belongs to the amidase family. GatA subfamily. In terms of assembly, heterotrimer of A, B and C subunits.

The enzyme catalyses L-glutamyl-tRNA(Gln) + L-glutamine + ATP + H2O = L-glutaminyl-tRNA(Gln) + L-glutamate + ADP + phosphate + H(+). In terms of biological role, allows the formation of correctly charged Gln-tRNA(Gln) through the transamidation of misacylated Glu-tRNA(Gln) in organisms which lack glutaminyl-tRNA synthetase. The reaction takes place in the presence of glutamine and ATP through an activated gamma-phospho-Glu-tRNA(Gln). The sequence is that of Glutamyl-tRNA(Gln) amidotransferase subunit A from Bacillus cereus (strain ATCC 14579 / DSM 31 / CCUG 7414 / JCM 2152 / NBRC 15305 / NCIMB 9373 / NCTC 2599 / NRRL B-3711).